A 224-amino-acid polypeptide reads, in one-letter code: Putative O-methyltransferase MMAR_4217 (224 aa).

Residues 1–11 (MHGTDSSSDTP) show a composition bias toward polar residues. Residues 1–20 (MHGTDSSSDTPGQPAPSRAE) form a disordered region. Residues Val-51, Glu-73, 75-76 (GT), Ser-81, Asp-99, and Ile-100 contribute to the S-adenosyl-L-methionine site. Asp-147 lines the substrate pocket. Asp-149 provides a ligand contact to S-adenosyl-L-methionine.

It belongs to the class I-like SAM-binding methyltransferase superfamily. Cation-dependent O-methyltransferase family.

The sequence is that of Putative O-methyltransferase MMAR_4217 from Mycobacterium marinum (strain ATCC BAA-535 / M).